The chain runs to 438 residues: Adenylosuccinate synthetase (438 aa).

GTP-binding positions include 12 to 18 (GDEGKGK) and 40 to 42 (GHT). Asp13 functions as the Proton acceptor in the catalytic mechanism. 2 residues coordinate Mg(2+): Asp13 and Gly40. Residues 13–16 (DEGK), 38–41 (NAGH), Thr128, Arg142, Gln223, Thr238, and Arg302 each bind IMP. Residue His41 is the Proton donor of the active site. 298–304 (TTTGRPR) provides a ligand contact to substrate. GTP-binding positions include Arg304, 330–332 (KLD), and 412–414 (GVG).

This sequence belongs to the adenylosuccinate synthetase family. In terms of assembly, homodimer. Requires Mg(2+) as cofactor.

The protein resides in the cytoplasm. It carries out the reaction IMP + L-aspartate + GTP = N(6)-(1,2-dicarboxyethyl)-AMP + GDP + phosphate + 2 H(+). It functions in the pathway purine metabolism; AMP biosynthesis via de novo pathway; AMP from IMP: step 1/2. Its function is as follows. Plays an important role in the de novo pathway of purine nucleotide biosynthesis. Catalyzes the first committed step in the biosynthesis of AMP from IMP. The chain is Adenylosuccinate synthetase from Leifsonia xyli subsp. xyli (strain CTCB07).